Consider the following 147-residue polypeptide: Peptide methionine sulfoxide reductase MsrB (147 aa).

A MsrB domain is found at 25–147 (DEYWREHLTE…NSVSLIFNKK (123 aa)). The Zn(2+) site is built by Cys64, Cys67, Cys113, and Cys116. The Nucleophile role is filled by Cys136.

It belongs to the MsrB Met sulfoxide reductase family. Requires Zn(2+) as cofactor.

It carries out the reaction L-methionyl-[protein] + [thioredoxin]-disulfide + H2O = L-methionyl-(R)-S-oxide-[protein] + [thioredoxin]-dithiol. This chain is Peptide methionine sulfoxide reductase MsrB, found in Vibrio cholerae serotype O1 (strain ATCC 39541 / Classical Ogawa 395 / O395).